Reading from the N-terminus, the 427-residue chain is Glutamate-1-semialdehyde 2,1-aminomutase (427 aa).

Lys-265 is subject to N6-(pyridoxal phosphate)lysine.

This sequence belongs to the class-III pyridoxal-phosphate-dependent aminotransferase family. HemL subfamily. Homodimer. Pyridoxal 5'-phosphate serves as cofactor.

Its subcellular location is the cytoplasm. It catalyses the reaction (S)-4-amino-5-oxopentanoate = 5-aminolevulinate. It functions in the pathway porphyrin-containing compound metabolism; protoporphyrin-IX biosynthesis; 5-aminolevulinate from L-glutamyl-tRNA(Glu): step 2/2. This Pseudomonas aeruginosa (strain LESB58) protein is Glutamate-1-semialdehyde 2,1-aminomutase.